The primary structure comprises 254 residues: 5'-nucleotidase SurE (254 aa).

4 residues coordinate a divalent metal cation: aspartate 8, aspartate 9, serine 38, and asparagine 91.

The protein belongs to the SurE nucleotidase family. It depends on a divalent metal cation as a cofactor.

Its subcellular location is the cytoplasm. It carries out the reaction a ribonucleoside 5'-phosphate + H2O = a ribonucleoside + phosphate. Functionally, nucleotidase that shows phosphatase activity on nucleoside 5'-monophosphates. This Anaeromyxobacter dehalogenans (strain 2CP-1 / ATCC BAA-258) protein is 5'-nucleotidase SurE.